The sequence spans 124 residues: UPF0102 protein tll1737 (124 aa).

It belongs to the UPF0102 family.

In Thermosynechococcus vestitus (strain NIES-2133 / IAM M-273 / BP-1), this protein is UPF0102 protein tll1737.